The sequence spans 349 residues: MRVADFHFELPESLIARHPLAERRASRLLVLDGVTGDLQHRRFADLLDHLRPGDLMVFNNTRVIPARLFGWKASGGKLEILVERVLDDERVLAHVRASKSPKAGSRILIEGGGEAQMLARHDALFELRFDQRVLPLLERVGHMPLPPYIDRPDEAADRERYQTVYAARAGAVAAPTAGLHFDEALLAAIGEKDVATAFVTLHVGAGTFQPVRVERIEDHHMHREWLEVGQEVVDAVAACRARGGRVVAVGTTSVRSLESAARDGVLRPFSGDTDIFIYPGRPFHVVDALVTNFHLPESTLLMLVSAFAGYPETMAAYAAAVAQGYRFFSYGDAMFITRNPAPRAPEETP.

The protein belongs to the QueA family. Monomer.

It localises to the cytoplasm. It carries out the reaction 7-aminomethyl-7-carbaguanosine(34) in tRNA + S-adenosyl-L-methionine = epoxyqueuosine(34) in tRNA + adenine + L-methionine + 2 H(+). It participates in tRNA modification; tRNA-queuosine biosynthesis. Transfers and isomerizes the ribose moiety from AdoMet to the 7-aminomethyl group of 7-deazaguanine (preQ1-tRNA) to give epoxyqueuosine (oQ-tRNA). In Azotobacter vinelandii (strain DJ / ATCC BAA-1303), this protein is S-adenosylmethionine:tRNA ribosyltransferase-isomerase.